A 197-amino-acid chain; its full sequence is MTLLPGLLFLTWLHTCLAHHDPSLRGHPHSHGTPHCYSAEELPLGQAPPHLLARGAKWGQALPVALVSSLEAASHRGRHERPSATTQCPVLRPEEVLEADTHQRSISPWRYRVDTDEDRYPQKLAFAECLCRGCIDARTGRETAALNSVRLLQSLLVLRRRPCSRDGSGLPTPGAFAFHTEFIHVPVGCTCVLPRSV.

Residues 1-18 (MTLLPGLLFLTWLHTCLA) form the signal peptide. 2 disulfide bridges follow: C129-C189 and C134-C191.

It belongs to the IL-17 family. As to quaternary structure, binds to a heterodimer formed by IL17RA and IL17RE.

Its subcellular location is the secreted. In terms of biological role, cytokine that plays a crucial role in innate immunity of the epithelium, including to intestinal bacterial pathogens, in an autocrine manner. Stimulates the production of antibacterial peptides and pro-inflammatory molecules for host defense by signaling through the NF-kappa-B and MAPK pathways. Acts synergically with IL22 in inducing the expression of antibacterial peptides, including S100A8, S100A9, REG3A and REG3G. Synergy is also observed with TNF and IL1B in inducing DEFB2 from keratinocytes. Depending on the type of insult, may have both protective and pathogenic properties, either by maintaining epithelial homeostasis after an inflammatory challenge or by promoting inflammatory phenotype. Enhanced IL17C/IL17RE signaling may also lead to greater susceptibility to autoimmune diseases. The sequence is that of Interleukin-17C (IL17C) from Homo sapiens (Human).